A 174-amino-acid chain; its full sequence is Methionine-R-sulfoxide reductase B2, mitochondrial (174 aa).

The transit peptide at 1–61 directs the protein to the mitochondrion; the sequence is MARLLRALRG…PEQFYVTREK (61 aa). The region spanning 62-172 is the MsrB domain; that stretch reads GTEAPFSGMY…NSVALKFKPS (111 aa). Zn(2+)-binding residues include Cys82, Cys85, Cys138, and Cys141. Cys161 acts as the Nucleophile in catalysis.

The protein belongs to the MsrB Met sulfoxide reductase family. Requires Zn(2+) as cofactor.

It localises to the mitochondrion. The catalysed reaction is L-methionyl-[protein] + [thioredoxin]-disulfide + H2O = L-methionyl-(R)-S-oxide-[protein] + [thioredoxin]-dithiol. It carries out the reaction [thioredoxin]-disulfide + L-methionine + H2O = L-methionine (R)-S-oxide + [thioredoxin]-dithiol. Methionine-sulfoxide reductase that specifically reduces methionine (R)-sulfoxide back to methionine. While in many cases, methionine oxidation is the result of random oxidation following oxidative stress, methionine oxidation is also a post-translational modification that takes place on specific residue. Upon oxidative stress, may play a role in the preservation of mitochondrial integrity by decreasing the intracellular reactive oxygen species build-up through its scavenging role, hence contributing to cell survival and protein maintenance. This Rattus norvegicus (Rat) protein is Methionine-R-sulfoxide reductase B2, mitochondrial (Msrb2).